The sequence spans 235 residues: 5'-methylthioadenosine/S-adenosylhomocysteine nucleosidase (235 aa).

Glu12 serves as the catalytic Proton acceptor. Substrate-binding positions include Gly78, Ile152, and 173-174; that span reads ME. Asp197 acts as the Proton donor in catalysis.

Belongs to the PNP/UDP phosphorylase family. MtnN subfamily. In terms of assembly, homodimer.

The catalysed reaction is S-adenosyl-L-homocysteine + H2O = S-(5-deoxy-D-ribos-5-yl)-L-homocysteine + adenine. It carries out the reaction S-methyl-5'-thioadenosine + H2O = 5-(methylsulfanyl)-D-ribose + adenine. It catalyses the reaction 5'-deoxyadenosine + H2O = 5-deoxy-D-ribose + adenine. Its pathway is amino-acid biosynthesis; L-methionine biosynthesis via salvage pathway; S-methyl-5-thio-alpha-D-ribose 1-phosphate from S-methyl-5'-thioadenosine (hydrolase route): step 1/2. Functionally, catalyzes the irreversible cleavage of the glycosidic bond in both 5'-methylthioadenosine (MTA) and S-adenosylhomocysteine (SAH/AdoHcy) to adenine and the corresponding thioribose, 5'-methylthioribose and S-ribosylhomocysteine, respectively. Also cleaves 5'-deoxyadenosine, a toxic by-product of radical S-adenosylmethionine (SAM) enzymes, into 5-deoxyribose and adenine. Thus, is required for in vivo function of the radical SAM enzymes biotin synthase and lipoic acid synthase, that are inhibited by 5'-deoxyadenosine accumulation. The polypeptide is 5'-methylthioadenosine/S-adenosylhomocysteine nucleosidase (Proteus mirabilis (strain HI4320)).